The following is a 1253-amino-acid chain: Cytoplasmic FMR1-interacting protein 1 (1253 aa).

Ser-583 carries the phosphoserine modification. Residue Thr-1234 is modified to Phosphothreonine.

It belongs to the CYFIP family. Component of the WAVE1 complex composed of ABI2, CYFIP1 or CYFIP2, BRK1, NCKAP1 and WASF1/WAVE1. Within the complex, a heterodimer containing NCKAP1 and CYFIP1 interacts with a heterotrimer formed by WAVE1, ABI2 and BRK1. Component of the CYFIP1-EIF4E-FMR1 complex which is composed of CYFIP, EIF4E and FMR1. Interacts with FMR1 but does not bind to related proteins FXR1 or FXR2. Interaction with EIF4E stimulates FMR1 binding. Component of the WAVE2 complex composed of ABI1, CYFIP1/SRA1, NCKAP1/NAP1 (NCKAP1l/HEM1 in hematopoietic cells) and WASF2/WAVE2. Interacts with the active GTP-bound form of RAC1. Interacts through its C-terminus with the C-terminus of DPYSL2/CRMP2 which is necessary for DPYSL2-induced axon outgrowth. Interacts with NYAP1, NYAP2 and MYO16. Interacts with TMEM108 (via N-terminus); the interaction associates TMEM108 with the WAVE1 complex.

The protein localises to the cytoplasm. Its subcellular location is the perinuclear region. The protein resides in the cell projection. It is found in the lamellipodium. It localises to the ruffle. The protein localises to the synapse. Its subcellular location is the synaptosome. In terms of biological role, component of the CYFIP1-EIF4E-FMR1 complex which binds to the mRNA cap and mediates translational repression. In the CYFIP1-EIF4E-FMR1 complex this subunit is an adapter between EIF4E and FMR1. Promotes the translation repression activity of FMR1 in brain probably by mediating its association with EIF4E and mRNA. Regulates formation of membrane ruffles and lamellipodia. Plays a role in axon outgrowth. Binds to F-actin but not to RNA. Part of the WAVE complex that regulates actin filament reorganization via its interaction with the Arp2/3 complex. Actin remodeling activity is regulated by RAC1. Regulator of epithelial morphogenesis. As component of the WAVE1 complex, required for BDNF-NTRK2 endocytic trafficking and signaling from early endosomes. May act as an invasion suppressor in cancers. The protein is Cytoplasmic FMR1-interacting protein 1 of Homo sapiens (Human).